A 179-amino-acid chain; its full sequence is MATLRKVYREEVTPALKERFGYQNVMQVPQLQKIVINMGLGEATKDKKILEAAQEDLAKIAGQKPVVTRARKSVAGFKIREGWPIGCKVTLRRDRMYEFLERFIHVASPRVRDFRGFSPRSFDGRGNYNLGIREQLIFPEIDYDEIDRVRGMDITVSTTARTDAEGKALLEGFGFPFRT.

It belongs to the universal ribosomal protein uL5 family. Part of the 50S ribosomal subunit; part of the 5S rRNA/L5/L18/L25 subcomplex. Contacts the 5S rRNA and the P site tRNA. Forms a bridge to the 30S subunit in the 70S ribosome.

Functionally, this is one of the proteins that bind and probably mediate the attachment of the 5S RNA into the large ribosomal subunit, where it forms part of the central protuberance. In the 70S ribosome it contacts protein S13 of the 30S subunit (bridge B1b), connecting the 2 subunits; this bridge is implicated in subunit movement. Contacts the P site tRNA; the 5S rRNA and some of its associated proteins might help stabilize positioning of ribosome-bound tRNAs. The sequence is that of Large ribosomal subunit protein uL5 from Halorhodospira halophila (strain DSM 244 / SL1) (Ectothiorhodospira halophila (strain DSM 244 / SL1)).